Reading from the N-terminus, the 276-residue chain is 4-hydroxy-3-methylbut-2-enyl diphosphate reductase (276 aa).

C12 provides a ligand contact to [4Fe-4S] cluster. (2E)-4-hydroxy-3-methylbut-2-enyl diphosphate contacts are provided by H36 and H71. Residues H36 and H71 each coordinate dimethylallyl diphosphate. Residues H36 and H71 each coordinate isopentenyl diphosphate. C93 contributes to the [4Fe-4S] cluster binding site. H121 contacts (2E)-4-hydroxy-3-methylbut-2-enyl diphosphate. H121 is a dimethylallyl diphosphate binding site. Position 121 (H121) interacts with isopentenyl diphosphate. E123 (proton donor) is an active-site residue. T160 serves as a coordination point for (2E)-4-hydroxy-3-methylbut-2-enyl diphosphate. C188 is a binding site for [4Fe-4S] cluster. (2E)-4-hydroxy-3-methylbut-2-enyl diphosphate-binding residues include S216, S217, N218, and S259. The dimethylallyl diphosphate site is built by S216, S217, N218, and S259. S216, S217, N218, and S259 together coordinate isopentenyl diphosphate.

It belongs to the IspH family. It depends on [4Fe-4S] cluster as a cofactor.

The catalysed reaction is isopentenyl diphosphate + 2 oxidized [2Fe-2S]-[ferredoxin] + H2O = (2E)-4-hydroxy-3-methylbut-2-enyl diphosphate + 2 reduced [2Fe-2S]-[ferredoxin] + 2 H(+). It carries out the reaction dimethylallyl diphosphate + 2 oxidized [2Fe-2S]-[ferredoxin] + H2O = (2E)-4-hydroxy-3-methylbut-2-enyl diphosphate + 2 reduced [2Fe-2S]-[ferredoxin] + 2 H(+). Its pathway is isoprenoid biosynthesis; dimethylallyl diphosphate biosynthesis; dimethylallyl diphosphate from (2E)-4-hydroxy-3-methylbutenyl diphosphate: step 1/1. It functions in the pathway isoprenoid biosynthesis; isopentenyl diphosphate biosynthesis via DXP pathway; isopentenyl diphosphate from 1-deoxy-D-xylulose 5-phosphate: step 6/6. Catalyzes the conversion of 1-hydroxy-2-methyl-2-(E)-butenyl 4-diphosphate (HMBPP) into a mixture of isopentenyl diphosphate (IPP) and dimethylallyl diphosphate (DMAPP). Acts in the terminal step of the DOXP/MEP pathway for isoprenoid precursor biosynthesis. This chain is 4-hydroxy-3-methylbut-2-enyl diphosphate reductase, found in Nautilia profundicola (strain ATCC BAA-1463 / DSM 18972 / AmH).